The chain runs to 239 residues: Guanylate kinase (239 aa).

In terms of domain architecture, Guanylate kinase-like spans 19-197 (GLLIVVTGAS…AVSELLAVQQ (179 aa)). 26–33 (GASGVGKG) is an ATP binding site.

Belongs to the guanylate kinase family.

The protein resides in the cytoplasm. The catalysed reaction is GMP + ATP = GDP + ADP. Functionally, essential for recycling GMP and indirectly, cGMP. The chain is Guanylate kinase (gmk) from Deinococcus radiodurans (strain ATCC 13939 / DSM 20539 / JCM 16871 / CCUG 27074 / LMG 4051 / NBRC 15346 / NCIMB 9279 / VKM B-1422 / R1).